The primary structure comprises 329 residues: uncharacterized protein (329 aa).

The N-terminal stretch at 1–22 (MPLCNNFSGNLVVAVALFFAGA) is a signal peptide.

This is an uncharacterized protein from Arabidopsis thaliana (Mouse-ear cress).